The primary structure comprises 134 residues: MNIALIAHDNKKKMMINFTTAYELILLNHQLYATGTTGKRIMEETNLKVTRFQSGPLGGDQQIGAEIANNRMDVVIFLRDSLTAQPHEPDIQALIRLCDVHMIPVATNIATAEILIRALERGDLDWRERVKERG.

The region spanning 1-134 (MNIALIAHDN…DWRERVKERG (134 aa)) is the MGS-like domain. Substrate-binding positions include H8, K12, 34-37 (TGTT), and 54-55 (SG). The active-site Proton donor/acceptor is the D60. H87 contributes to the substrate binding site.

It belongs to the methylglyoxal synthase family.

The enzyme catalyses dihydroxyacetone phosphate = methylglyoxal + phosphate. Functionally, catalyzes the formation of methylglyoxal from dihydroxyacetone phosphate. The protein is Methylglyoxal synthase of Alkaliphilus metalliredigens (strain QYMF).